Here is a 112-residue protein sequence, read N- to C-terminus: Integration host factor subunit alpha (112 aa).

The protein belongs to the bacterial histone-like protein family. In terms of assembly, heterodimer of an alpha and a beta chain.

In terms of biological role, this protein is one of the two subunits of integration host factor, a specific DNA-binding protein that functions in genetic recombination as well as in transcriptional and translational control. The protein is Integration host factor subunit alpha of Rhizobium leguminosarum bv. trifolii (strain WSM2304).